The sequence spans 590 residues: Zinc finger protein 703 (590 aa).

Over residues 1-14 (MSDSPAGSNPRTPE) the composition is skewed to polar residues. Disordered regions lie at residues 1-43 (MSDS…DPLR), 96-293 (CSQI…AGHV), and 341-366 (LVGGQLSGGLGLPPGKPPSSSPLTGA). S2 is subject to N-acetylserine. 4 stretches are compositionally biased toward low complexity: residues 27–37 (PAVPAAVSLLP), 128–139 (RSAPGAASAAAA), 171–189 (GSSSVSSTSSSSSSSPGDK), and 207–219 (APVSASSSSSSPG). Positions 241–251 (ELDKKDQEPKP) are enriched in basic and acidic residues. S252 is modified (phosphoserine). Gly residues-rich tracts occupy residues 260-273 (RGGGGEPGAHGGAE) and 341-352 (LVGGQLSGGLGL). The C2H2-type zinc finger occupies 456 to 484 (HSCNWVAASGPCDKRFATSEELLSHLRTH). An Omega-N-methylarginine modification is found at R580.

Belongs to the Elbow/Noc family. As to quaternary structure, interacts with TLE4; increases transcriptional repression. Interacts with DCAF7 and PHB2. May interact with HSPD1. In terms of tissue distribution, expressed in mammary epithelium.

It is found in the nucleus. The protein resides in the cytoplasm. Functionally, transcriptional corepressor which does not bind directly to DNA and may regulate transcription through recruitment of histone deacetylases to gene promoters. Regulates cell adhesion, migration and proliferation. May be required for segmental gene expression during hindbrain development. The sequence is that of Zinc finger protein 703 (ZNF703) from Homo sapiens (Human).